Reading from the N-terminus, the 481-residue chain is MQWEVVIGLEIHTQLTTRSKIFSGSSTQFGSEPNTQASLIDLGMPGVLPVLNQEAVRMAVMFGLAIDAEIGQHNVFARKNYFYPDLPKGYQISQMELPIVGKGHLDIALEDGTVKRVGITRAHLEEDAGKSLHEEFSGATGIDLNRAGTPLLEIVSEPDMRSAKEAVAYVKAIHALVRYLGICDGNMAEGSLRCDCNVSIRPKGQAEFGTRCEIKNVNSFRFIEKAINSEIQRQIDLIEDGGKVIQQTRLYDPNKDETRPMRSKEEANDYRYFPDPDLLPVVIEDSFLNDVRATLPELPPQKRERFQSAFGLSAYDANVLATSREQADYFEKVASIGGDAKLAANWVMVELGSLLNKQNLDIEDSPVSAEQLGGMLQRIKDNTISGKIAKVVFEAMANGEGSADEIIEKCGLKQVTDTGAISAVLDEMLAANAEQVEQYRAADEAKRGKMFGFFVGQAMKASKGKANPQQVNELLKSKLEG.

It belongs to the GatB/GatE family. GatB subfamily. Heterotrimer of A, B and C subunits.

The catalysed reaction is L-glutamyl-tRNA(Gln) + L-glutamine + ATP + H2O = L-glutaminyl-tRNA(Gln) + L-glutamate + ADP + phosphate + H(+). It catalyses the reaction L-aspartyl-tRNA(Asn) + L-glutamine + ATP + H2O = L-asparaginyl-tRNA(Asn) + L-glutamate + ADP + phosphate + 2 H(+). Functionally, allows the formation of correctly charged Asn-tRNA(Asn) or Gln-tRNA(Gln) through the transamidation of misacylated Asp-tRNA(Asn) or Glu-tRNA(Gln) in organisms which lack either or both of asparaginyl-tRNA or glutaminyl-tRNA synthetases. The reaction takes place in the presence of glutamine and ATP through an activated phospho-Asp-tRNA(Asn) or phospho-Glu-tRNA(Gln). The chain is Aspartyl/glutamyl-tRNA(Asn/Gln) amidotransferase subunit B from Pseudomonas fluorescens (strain Pf0-1).